A 367-amino-acid chain; its full sequence is MISWLDIYHVVSATVPLYVSMTLGFLSARHLKLFSPEQCAGINKFVAKFSIPLLSFQIISENNPFKMSPKLILSDILQKFLVVVVLAMVLRFWHPTGGRGGKLGWVITGLSISVLPNTLILGMPILSAIYGDEAASILEQIVVLQSLIWYTILLFLFELNAARALPSSGASLEHTGNDQEEANIEDEPKEEEDEEEVAIVRTRSVGTMKILLKAWRKLIINPNTYATLIGIIWATLHFRLGWNLPEMIDKSIHLLSDGGLGMAMFSLGLFMASQSSIIACGTKMAIITMLLKFVLGPALMIASAYCIRLKSTLFKVAILQAALPQGVVPFVFAKEYNLHPEIISTGVIFGMLIALPTTLAYYFLLDL.

The Extracellular portion of the chain corresponds to 1–6 (MISWLD). Residues 7 to 27 (IYHVVSATVPLYVSMTLGFLS) traverse the membrane as a helical segment. Residues 28–38 (ARHLKLFSPEQ) are Cytoplasmic-facing. The helical transmembrane segment at 39–59 (CAGINKFVAKFSIPLLSFQII) threads the bilayer. Ile51 serves as a coordination point for (indol-3-yl)acetate. The Extracellular segment spans residues 60–69 (SENNPFKMSP). The helical transmembrane segment at 70-90 (KLILSDILQKFLVVVVLAMVL) threads the bilayer. Residues 91–105 (RFWHPTGGRGGKLGW) are Cytoplasmic-facing. A helical transmembrane segment spans residues 106–126 (VITGLSISVLPNTLILGMPIL). (indol-3-yl)acetate is bound by residues Asn117 and Leu119. Topologically, residues 127-136 (SAIYGDEAAS) are extracellular. A helical membrane pass occupies residues 137-157 (ILEQIVVLQSLIWYTILLFLF). Residue Tyr150 participates in (indol-3-yl)acetate binding. Residues 158–227 (ELNAARALPS…LIINPNTYAT (70 aa)) lie on the Cytoplasmic side of the membrane. The interval 168-194 (SGASLEHTGNDQEEANIEDEPKEEEDE) is disordered. The span at 178 to 194 (DQEEANIEDEPKEEEDE) shows a compositional bias: acidic residues. The helical transmembrane segment at 228–248 (LIGIIWATLHFRLGWNLPEMI) threads the bilayer. Topologically, residues 249–251 (DKS) are extracellular. Residues 252–272 (IHLLSDGGLGMAMFSLGLFMA) form a helical membrane-spanning segment. Residues 273-288 (SQSSIIACGTKMAIIT) are Cytoplasmic-facing. The helical transmembrane segment at 289-309 (MLLKFVLGPALMIASAYCIRL) threads the bilayer. Topologically, residues 310–312 (KST) are extracellular. The helical transmembrane segment at 313–333 (LFKVAILQAALPQGVVPFVFA) threads the bilayer. (indol-3-yl)acetate contacts are provided by Val327 and Val328. At 334 to 344 (KEYNLHPEIIS) the chain is on the cytoplasmic side. A helical transmembrane segment spans residues 345-365 (TGVIFGMLIALPTTLAYYFLL). The Extracellular portion of the chain corresponds to 366-367 (DL).

The protein belongs to the auxin efflux carrier (TC 2.A.69.1) family. As to quaternary structure, homodimer. Expressed in veins of mature leaves. Strongly expressed in pollen.

It is found in the endoplasmic reticulum membrane. The protein resides in the cell membrane. Auxin efflux carrier activity is competitively inhibited by naptalamate (N-1-naphthylphthalamic acid, NPA). Acts as a component of the auxin efflux carrier. Component of the intracellular auxin-transport pathway in the male gametophyte. Involved in the regulation of auxin homeostasis in pollen. Involved in the efflux of auxin from the endoplasmic reticulum into the cytoplasm. Binds auxins including indole-3-acetic acid (IAA), naphthaleneacetic acid (NAA) and the herbicide 2,4-dichlorophenoxyacetic acid (2,4-D), but barely indole-3-butyric acid (IBA) and 2-phenylacetic acid (PAA). PIN5 and PIN8 may have an antagonistic/compensatory activity. Involved in the control of vein patterning. Redundantly with PIN6, inhibits the vein-formation-promoting functions of PIN5. PIN5, PIN6, and PIN8 control vein network geometry, but they are expressed in mutually exclusive domains of leaf vascular cells. The chain is Auxin efflux carrier component 8 from Arabidopsis thaliana (Mouse-ear cress).